The following is a 389-amino-acid chain: Trans-2-enoyl-CoA reductase [NADH] (389 aa).

Residues Gly47 to Tyr52, Phe73 to Glu74, Asp110 to Ala111, and Leu138 to Ala139 contribute to the NAD(+) site. Position 224 (Tyr224) interacts with substrate. Catalysis depends on Tyr234, which acts as the Proton donor. Residues Lys243 and Leu272 to Thr274 contribute to the NAD(+) site.

It belongs to the TER reductase family. In terms of assembly, monomer.

The catalysed reaction is a 2,3-saturated acyl-CoA + NAD(+) = a (2E)-enoyl-CoA + NADH + H(+). Its pathway is lipid metabolism; fatty acid biosynthesis. Its function is as follows. Involved in the fatty acid synthesis (FAS II). Catalyzes the reduction of a carbon-carbon double bond in an enoyl moiety that is covalently linked to a coenzyme A (CoA). The protein is Trans-2-enoyl-CoA reductase [NADH] of Clostridium perfringens (strain SM101 / Type A).